We begin with the raw amino-acid sequence, 138 residues long: UPF0047 protein MJ1081 (138 aa).

It belongs to the UPF0047 family.

The chain is UPF0047 protein MJ1081 from Methanocaldococcus jannaschii (strain ATCC 43067 / DSM 2661 / JAL-1 / JCM 10045 / NBRC 100440) (Methanococcus jannaschii).